The following is a 147-amino-acid chain: Hemoglobin subunit beta-2 (147 aa).

The Globin domain occupies 3–147 (EWTDSERAII…VVSALGRQYH (145 aa)). Heme b-binding residues include H64 and H93.

The protein belongs to the globin family. As to quaternary structure, hb 3 is a heterotetramer of two alpha-2 and two beta-2 chains. In terms of tissue distribution, red blood cells.

Functionally, involved in oxygen transport from gills to the various peripheral tissues. The protein is Hemoglobin subunit beta-2 (hbb2) of Boreogadus saida (Polar cod).